The sequence spans 248 residues: 2,3-bisphosphoglycerate-dependent phosphoglycerate mutase (248 aa).

Substrate-binding positions include 8-15 (RHGESTWN), 21-22 (TG), R60, 87-90 (ERHY), K98, 114-115 (RR), and 183-184 (GN). H9 acts as the Tele-phosphohistidine intermediate in catalysis. The active-site Proton donor/acceptor is E87.

This sequence belongs to the phosphoglycerate mutase family. BPG-dependent PGAM subfamily. Homodimer.

It catalyses the reaction (2R)-2-phosphoglycerate = (2R)-3-phosphoglycerate. It functions in the pathway carbohydrate degradation; glycolysis; pyruvate from D-glyceraldehyde 3-phosphate: step 3/5. Functionally, catalyzes the interconversion of 2-phosphoglycerate and 3-phosphoglycerate. The chain is 2,3-bisphosphoglycerate-dependent phosphoglycerate mutase from Burkholderia vietnamiensis (strain G4 / LMG 22486) (Burkholderia cepacia (strain R1808)).